The chain runs to 356 residues: Peritrophin-44 (356 aa).

Positions 1–23 (MKELQITTGCLLLMVAAIGKTSA) are cleaved as a signal peptide. 5 Chitin-binding type-2 domains span residues 28 to 85 (SETC…KCIS), 88 to 146 (KNAC…ECTA), 147 to 201 (DSIC…PCLA), 220 to 283 (NFVC…PCTF), and 286 to 355 (CGNL…YKLC). A disulfide bridge links Cys-62 with Cys-75. Asn-114 carries N-linked (GlcNAc...) asparagine glycosylation. 3 disulfide bridges follow: Cys-122/Cys-135, Cys-181/Cys-193, and Cys-262/Cys-273. Asn-309 carries an N-linked (GlcNAc...) asparagine glycan.

In terms of processing, glycosylated. In terms of tissue distribution, larval peritrophic membrane.

Its function is as follows. May have roles in the maintenance of peritrophic membrane structure and in the determination of the porosity of the peritrophic membrane. May bind chitin or related oligosaccharide structures. This chain is Peritrophin-44, found in Lucilia cuprina (Green bottle fly).